Reading from the N-terminus, the 230-residue chain is tRNA (guanine-N(7)-)-methyltransferase (230 aa).

Residues Glu61, Glu86, Asn113, and Asp136 each coordinate S-adenosyl-L-methionine. The active site involves Asp136. Substrate contacts are provided by residues Lys140, Asp172, and 208–211 (TKYE).

The protein belongs to the class I-like SAM-binding methyltransferase superfamily. TrmB family.

It catalyses the reaction guanosine(46) in tRNA + S-adenosyl-L-methionine = N(7)-methylguanosine(46) in tRNA + S-adenosyl-L-homocysteine. It functions in the pathway tRNA modification; N(7)-methylguanine-tRNA biosynthesis. Catalyzes the formation of N(7)-methylguanine at position 46 (m7G46) in tRNA. The chain is tRNA (guanine-N(7)-)-methyltransferase from Mycobacterium leprae (strain Br4923).